Consider the following 273-residue polypeptide: Probable ribosomal RNA small subunit methyltransferase A (273 aa).

N23, L25, G50, E71, D95, and N110 together coordinate S-adenosyl-L-methionine.

The protein belongs to the class I-like SAM-binding methyltransferase superfamily. rRNA adenine N(6)-methyltransferase family. RsmA subfamily.

It localises to the cytoplasm. Its function is as follows. Specifically dimethylates two adjacent adenosines in the loop of a conserved hairpin near the 3'-end of 16S rRNA in the 30S particle. May play a critical role in biogenesis of 30S subunits. This Thermococcus sibiricus (strain DSM 12597 / MM 739) protein is Probable ribosomal RNA small subunit methyltransferase A.